A 98-amino-acid polypeptide reads, in one-letter code: Small ribosomal subunit protein bS18 (98 aa).

It belongs to the bacterial ribosomal protein bS18 family. As to quaternary structure, part of the 30S ribosomal subunit. Forms a tight heterodimer with protein bS6.

Functionally, binds as a heterodimer with protein bS6 to the central domain of the 16S rRNA, where it helps stabilize the platform of the 30S subunit. The chain is Small ribosomal subunit protein bS18 from Flavobacterium johnsoniae (strain ATCC 17061 / DSM 2064 / JCM 8514 / BCRC 14874 / CCUG 350202 / NBRC 14942 / NCIMB 11054 / UW101) (Cytophaga johnsonae).